Reading from the N-terminus, the 516-residue chain is uncharacterized protein (516 aa).

This is an uncharacterized protein from Azotobacter chroococcum mcd 1.